Consider the following 168-residue polypeptide: Nuclear cap-binding protein subunit 2 (168 aa).

Residues tyrosine 23, tyrosine 46, 115–119 (RTDWD), 126–130 (RQYGR), and 136–137 (QV) each bind mRNA. An RRM domain is found at 43–121 (STLYVGNLSF…RIVRTDWDAG (79 aa)).

The protein belongs to the RRM NCBP2 family. As to quaternary structure, component of the nuclear cap-binding complex (CBC), a heterodimer composed of NCBP1/CBP80 and NCBP2/CBP20 that interacts with m7GpppG-capped RNA.

It localises to the nucleus. It is found in the cytoplasm. Functionally, component of the cap-binding complex (CBC), which binds co-transcriptionally to the 5' cap of pre-mRNAs and is involved in various processes such as pre-mRNA splicing, translation regulation, nonsense-mediated mRNA decay, RNA-mediated gene silencing (RNAi) by microRNAs (miRNAs) and mRNA export. The CBC complex is involved in mRNA export from the nucleus, leading to the recruitment of the mRNA export machinery to the 5' end of mRNA and to mRNA export in a 5' to 3' direction through the nuclear pore. The CBC complex is also involved in mediating U snRNA and intronless mRNAs export from the nucleus. The CBC complex is essential for a pioneer round of mRNA translation, before steady state translation when the CBC complex is replaced by cytoplasmic cap-binding protein eIF4E. The pioneer round of mRNA translation mediated by the CBC complex plays a central role in nonsense-mediated mRNA decay (NMD), NMD only taking place in mRNAs bound to the CBC complex, but not on eIF4E-bound mRNAs. The CBC complex enhances NMD in mRNAs containing at least one exon-junction complex (EJC), promoting the interaction between UPF1 and UPF2. The CBC complex is also involved in 'failsafe' NMD, which is independent of the EJC complex, while it does not participate in Staufen-mediated mRNA decay (SMD). During cell proliferation, the CBC complex is also involved in microRNAs (miRNAs) biogenesis via its interaction with SRRT/ARS2, thereby being required for miRNA-mediated RNA interference. The CBC complex also acts as a negative regulator of PARN, thereby acting as an inhibitor of mRNA deadenylation. In the CBC complex, NCBP2/CBP20 recognizes and binds capped RNAs (m7GpppG-capped RNA) but requires NCBP1/CBP80 to stabilize the movement of its N-terminal loop and lock the CBC into a high affinity cap-binding state with the cap structure. The conventional cap-binding complex with NCBP2 binds both small nuclear RNA (snRNA) and messenger (mRNA) and is involved in their export from the nucleus. The chain is Nuclear cap-binding protein subunit 2 (NCBP2) from Gallus gallus (Chicken).